Reading from the N-terminus, the 92-residue chain is Small ribosomal subunit protein uS19c (92 aa).

Belongs to the universal ribosomal protein uS19 family.

It is found in the plastid. Its subcellular location is the chloroplast. Protein S19 forms a complex with S13 that binds strongly to the 16S ribosomal RNA. The protein is Small ribosomal subunit protein uS19c of Platanus occidentalis (Sycamore).